Consider the following 38-residue polypeptide: Large ribosomal subunit protein bL36A (38 aa).

The protein belongs to the bacterial ribosomal protein bL36 family.

The chain is Large ribosomal subunit protein bL36A from Pseudomonas aeruginosa (strain UCBPP-PA14).